Consider the following 171-residue polypeptide: Transcriptional repressor NrdR (171 aa).

The segment at 3–34 is a zinc-finger region; it reads CPFCGDPNTQVADTRENEGGEVVRRRRRCPKC. An ATP-cone domain is found at 49 to 139; the sequence is PHIVKRNGNR…VYRNFADVDE (91 aa). Residues 148–171 are disordered; it reads KARPKRNRPAEPPEPTSENDLFRS.

This sequence belongs to the NrdR family. Zn(2+) is required as a cofactor.

Negatively regulates transcription of bacterial ribonucleotide reductase nrd genes and operons by binding to NrdR-boxes. This Aromatoleum aromaticum (strain DSM 19018 / LMG 30748 / EbN1) (Azoarcus sp. (strain EbN1)) protein is Transcriptional repressor NrdR.